Reading from the N-terminus, the 437-residue chain is Phosphomethylpyrimidine synthase (437 aa).

Substrate contacts are provided by residues asparagine 69, methionine 98, tyrosine 127, histidine 163, 185–187 (SRG), 226–229 (DACR), and glutamate 265. Histidine 269 lines the Zn(2+) pocket. Residue tyrosine 292 coordinates substrate. Histidine 333 provides a ligand contact to Zn(2+). Cysteine 409, cysteine 412, and cysteine 416 together coordinate [4Fe-4S] cluster.

The protein belongs to the ThiC family. [4Fe-4S] cluster serves as cofactor.

The catalysed reaction is 5-amino-1-(5-phospho-beta-D-ribosyl)imidazole + S-adenosyl-L-methionine = 4-amino-2-methyl-5-(phosphooxymethyl)pyrimidine + CO + 5'-deoxyadenosine + formate + L-methionine + 3 H(+). It participates in cofactor biosynthesis; thiamine diphosphate biosynthesis. Its function is as follows. Catalyzes the synthesis of the hydroxymethylpyrimidine phosphate (HMP-P) moiety of thiamine from aminoimidazole ribotide (AIR) in a radical S-adenosyl-L-methionine (SAM)-dependent reaction. This is Phosphomethylpyrimidine synthase from Clostridium botulinum (strain ATCC 19397 / Type A).